Reading from the N-terminus, the 449-residue chain is Phosphoglucosamine mutase (449 aa).

The active-site Phosphoserine intermediate is the Ser101. 4 residues coordinate Mg(2+): Ser101, Asp241, Asp243, and Asp245. Ser101 is modified (phosphoserine).

This sequence belongs to the phosphohexose mutase family. It depends on Mg(2+) as a cofactor. Activated by phosphorylation.

It carries out the reaction alpha-D-glucosamine 1-phosphate = D-glucosamine 6-phosphate. Catalyzes the conversion of glucosamine-6-phosphate to glucosamine-1-phosphate. This chain is Phosphoglucosamine mutase, found in Ruminiclostridium cellulolyticum (strain ATCC 35319 / DSM 5812 / JCM 6584 / H10) (Clostridium cellulolyticum).